A 94-amino-acid chain; its full sequence is Small ribosomal subunit protein uS19 (94 aa).

Belongs to the universal ribosomal protein uS19 family.

Protein S19 forms a complex with S13 that binds strongly to the 16S ribosomal RNA. The chain is Small ribosomal subunit protein uS19 from Syntrophomonas wolfei subsp. wolfei (strain DSM 2245B / Goettingen).